A 223-amino-acid chain; its full sequence is Deoxyribose-phosphate aldolase (223 aa).

Asp-91 serves as the catalytic Proton donor/acceptor. Lys-153 serves as the catalytic Schiff-base intermediate with acetaldehyde. Lys-182 serves as the catalytic Proton donor/acceptor.

The protein belongs to the DeoC/FbaB aldolase family. DeoC type 1 subfamily.

Its subcellular location is the cytoplasm. The enzyme catalyses 2-deoxy-D-ribose 5-phosphate = D-glyceraldehyde 3-phosphate + acetaldehyde. It participates in carbohydrate degradation; 2-deoxy-D-ribose 1-phosphate degradation; D-glyceraldehyde 3-phosphate and acetaldehyde from 2-deoxy-alpha-D-ribose 1-phosphate: step 2/2. Catalyzes a reversible aldol reaction between acetaldehyde and D-glyceraldehyde 3-phosphate to generate 2-deoxy-D-ribose 5-phosphate. This Streptococcus pyogenes serotype M2 (strain MGAS10270) protein is Deoxyribose-phosphate aldolase.